The chain runs to 1385 residues: DNA-directed RNA polymerase subunit beta'' (1385 aa).

4 residues coordinate Zn(2+): Cys-224, Cys-294, Cys-301, and Cys-304.

The protein belongs to the RNA polymerase beta' chain family. RpoC2 subfamily. As to quaternary structure, in plastids the minimal PEP RNA polymerase catalytic core is composed of four subunits: alpha, beta, beta', and beta''. When a (nuclear-encoded) sigma factor is associated with the core the holoenzyme is formed, which can initiate transcription. It depends on Zn(2+) as a cofactor.

The protein resides in the plastid. It is found in the chloroplast. It catalyses the reaction RNA(n) + a ribonucleoside 5'-triphosphate = RNA(n+1) + diphosphate. DNA-dependent RNA polymerase catalyzes the transcription of DNA into RNA using the four ribonucleoside triphosphates as substrates. This Illicium oligandrum (Star anise) protein is DNA-directed RNA polymerase subunit beta''.